Reading from the N-terminus, the 378-residue chain is Alanine racemase (378 aa).

Residue K40 is the Proton acceptor; specific for D-alanine of the active site. K40 is subject to N6-(pyridoxal phosphate)lysine. Position 140 (R140) interacts with substrate. The Proton acceptor; specific for L-alanine role is filled by Y270. M317 contacts substrate.

This sequence belongs to the alanine racemase family. Pyridoxal 5'-phosphate serves as cofactor.

It catalyses the reaction L-alanine = D-alanine. Its pathway is amino-acid biosynthesis; D-alanine biosynthesis; D-alanine from L-alanine: step 1/1. Catalyzes the interconversion of L-alanine and D-alanine. May also act on other amino acids. The chain is Alanine racemase (alr) from Lacticaseibacillus paracasei (strain ATCC 334 / BCRC 17002 / CCUG 31169 / CIP 107868 / KCTC 3260 / NRRL B-441) (Lactobacillus paracasei).